A 310-amino-acid chain; its full sequence is Porphobilinogen deaminase (310 aa).

The residue at position 242 (Cys-242) is an S-(dipyrrolylmethanemethyl)cysteine.

Belongs to the HMBS family. As to quaternary structure, monomer. Dipyrromethane is required as a cofactor.

The enzyme catalyses 4 porphobilinogen + H2O = hydroxymethylbilane + 4 NH4(+). The protein operates within porphyrin-containing compound metabolism; protoporphyrin-IX biosynthesis; coproporphyrinogen-III from 5-aminolevulinate: step 2/4. Functionally, tetrapolymerization of the monopyrrole PBG into the hydroxymethylbilane pre-uroporphyrinogen in several discrete steps. This Shewanella baltica (strain OS195) protein is Porphobilinogen deaminase.